The primary structure comprises 373 residues: 4-hydroxy-3-methylbut-2-en-1-yl diphosphate synthase (flavodoxin) (373 aa).

4 residues coordinate [4Fe-4S] cluster: C270, C273, C305, and E312.

It belongs to the IspG family. The cofactor is [4Fe-4S] cluster.

The catalysed reaction is (2E)-4-hydroxy-3-methylbut-2-enyl diphosphate + oxidized [flavodoxin] + H2O + 2 H(+) = 2-C-methyl-D-erythritol 2,4-cyclic diphosphate + reduced [flavodoxin]. The protein operates within isoprenoid biosynthesis; isopentenyl diphosphate biosynthesis via DXP pathway; isopentenyl diphosphate from 1-deoxy-D-xylulose 5-phosphate: step 5/6. Functionally, converts 2C-methyl-D-erythritol 2,4-cyclodiphosphate (ME-2,4cPP) into 1-hydroxy-2-methyl-2-(E)-butenyl 4-diphosphate. This is 4-hydroxy-3-methylbut-2-en-1-yl diphosphate synthase (flavodoxin) from Pectobacterium carotovorum subsp. carotovorum (strain PC1).